Consider the following 129-residue polypeptide: MATKKGTRKRRVKKNIETGVAHIHSTFNNTLIMITDVQGNAVAWSSAGVLGFKGSRKSTPFAAQMASEAAAKQAMEHGMKTVEVEVKGPGSGRESAIRALQTTGLEVTAIRDVTPVPHNGSRPPKRRRV.

It belongs to the universal ribosomal protein uS11 family. As to quaternary structure, part of the 30S ribosomal subunit. Interacts with proteins S7 and S18. Binds to IF-3.

Located on the platform of the 30S subunit, it bridges several disparate RNA helices of the 16S rRNA. Forms part of the Shine-Dalgarno cleft in the 70S ribosome. The chain is Small ribosomal subunit protein uS11 from Limosilactobacillus fermentum (strain NBRC 3956 / LMG 18251) (Lactobacillus fermentum).